Here is a 256-residue protein sequence, read N- to C-terminus: Dihydroorotate dehydrogenase B (NAD(+)), electron transfer subunit (256 aa).

In terms of domain architecture, FAD-binding FR-type spans 2–100; it reads IRLETMKVVA…MGPQGNGFDL (99 aa). FAD-binding positions include 51–54, 68–70, and 75–76; these read RPIS, IYR, and GT. Cysteine 220, cysteine 225, cysteine 228, and cysteine 243 together coordinate [2Fe-2S] cluster.

Belongs to the PyrK family. Heterotetramer of 2 PyrK and 2 PyrD type B subunits. [2Fe-2S] cluster serves as cofactor. Requires FAD as cofactor.

Its pathway is pyrimidine metabolism; UMP biosynthesis via de novo pathway; orotate from (S)-dihydroorotate (NAD(+) route): step 1/1. Responsible for channeling the electrons from the oxidation of dihydroorotate from the FMN redox center in the PyrD type B subunit to the ultimate electron acceptor NAD(+). This is Dihydroorotate dehydrogenase B (NAD(+)), electron transfer subunit from Streptococcus pneumoniae (strain ATCC BAA-255 / R6).